The chain runs to 301 residues: Aspartate carbamoyltransferase catalytic subunit (301 aa).

The carbamoyl phosphate site is built by Arg-54 and Thr-55. Lys-82 contributes to the L-aspartate binding site. 3 residues coordinate carbamoyl phosphate: Arg-104, His-132, and Gln-135. Residues Arg-165 and Arg-217 each contribute to the L-aspartate site. Carbamoyl phosphate-binding residues include Gly-257 and Pro-258.

Belongs to the aspartate/ornithine carbamoyltransferase superfamily. ATCase family. As to quaternary structure, heterododecamer (2C3:3R2) of six catalytic PyrB chains organized as two trimers (C3), and six regulatory PyrI chains organized as three dimers (R2).

It carries out the reaction carbamoyl phosphate + L-aspartate = N-carbamoyl-L-aspartate + phosphate + H(+). Its pathway is pyrimidine metabolism; UMP biosynthesis via de novo pathway; (S)-dihydroorotate from bicarbonate: step 2/3. Functionally, catalyzes the condensation of carbamoyl phosphate and aspartate to form carbamoyl aspartate and inorganic phosphate, the committed step in the de novo pyrimidine nucleotide biosynthesis pathway. This Thermus aquaticus protein is Aspartate carbamoyltransferase catalytic subunit.